We begin with the raw amino-acid sequence, 1488 residues long: Chromosome partition protein MukB (1488 aa).

ATP is bound at residue 34–41 (GGNGAGKS). Coiled-coil stretches lie at residues 326–413 (LEAD…QTRA), 444–472 (LDTF…QTAH), and 509–602 (RHLA…RRAP). The flexible hinge stretch occupies residues 666-783 (PGGAEDQRLN…SLPIFGRAAR (118 aa)). Coiled coils occupy residues 835 to 923 (EAEI…AKLE), 977 to 1116 (EMLS…AKAG), and 1209 to 1265 (VEAI…LQSV).

The protein belongs to the SMC family. MukB subfamily. Homodimerization via its hinge domain. Binds to DNA via its C-terminal region. Interacts, and probably forms a ternary complex, with MukE and MukF via its C-terminal region. The complex formation is stimulated by calcium or magnesium. Interacts with tubulin-related protein FtsZ.

It localises to the cytoplasm. The protein localises to the nucleoid. Plays a central role in chromosome condensation, segregation and cell cycle progression. Functions as a homodimer, which is essential for chromosome partition. Involved in negative DNA supercoiling in vivo, and by this means organize and compact chromosomes. May achieve or facilitate chromosome segregation by condensation DNA from both sides of a centrally located replisome during cell division. This is Chromosome partition protein MukB from Salmonella paratyphi C (strain RKS4594).